A 362-amino-acid polypeptide reads, in one-letter code: Ribosome-binding ATPase YchF (362 aa).

The OBG-type G domain maps to 2-258 (LSAGIVGLPN…LDANGRQDWL (257 aa)). Position 11–16 (11–16 (NVGKST)) interacts with ATP. Ser15 and Thr35 together coordinate Mg(2+). Positions 281–347 (GLWSFFTFGK…EAKKQGLVRL (67 aa)) constitute a TGS domain.

It belongs to the TRAFAC class OBG-HflX-like GTPase superfamily. OBG GTPase family. YchF/OLA1 subfamily. Mg(2+) is required as a cofactor.

Functionally, ATPase that binds to both the 70S ribosome and the 50S ribosomal subunit in a nucleotide-independent manner. The protein is Ribosome-binding ATPase YchF of Mycoplasma pneumoniae (strain ATCC 29342 / M129 / Subtype 1) (Mycoplasmoides pneumoniae).